The sequence spans 2997 residues: Chromodomain-helicase-DNA-binding protein 7 (2997 aa).

Positions 86–144 are disordered; it reads PNRMMSNTPGNGLASPHSQYHTPPVPQVPHGGSGGGQMGVYPGMQNERHGQSFVDSSSM. A compositionally biased stretch (polar residues) spans 88 to 106; the sequence is RMMSNTPGNGLASPHSQYH. Arg-148 is subject to Omega-N-methylarginine. Disordered regions lie at residues 160-186, 199-287, 375-419, 498-816, and 938-959; these read YQQQ…PQHM, SMQQ…AVRP, QMNT…GSAG, GQQH…KQKE, and REPE…SESS. Pro residues predominate over residues 166 to 177; it reads QPQPPQPAPSGP. Composition is skewed to polar residues over residues 199-224 and 238-255; these read SMQQ…NQGN and VPQQ…SVQQ. Arg-286 carries the post-translational modification Asymmetric dimethylarginine. A compositionally biased stretch (polar residues) spans 375 to 390; that stretch reads QMNTQTMHPSQPQGTY. Over residues 498–510 the composition is skewed to low complexity; that stretch reads GQQHPGQQPSFQQ. The segment covering 607–620 has biased composition (basic and acidic residues); the sequence is VAEDPSKGFGKDDF. Polar residues predominate over residues 627–636; sequence QELNRNSLDG. Residue Ser-637 is modified to Phosphoserine. Composition is skewed to basic and acidic residues over residues 650–682 and 717–729; these read KKDP…EPKE and GKTE…DLDK. Ser-725 is subject to Phosphoserine. A compositionally biased stretch (basic residues) spans 746-758; the sequence is QKRRSSRQVKRKR. Over residues 759–769 the composition is skewed to basic and acidic residues; it reads YTEDLEFKISD. Residues 782-794 are compositionally biased toward polar residues; the sequence is SPSNTSQSEQQES. Chromo domains follow at residues 800-867 and 882-947; these read PVVE…GQNK and VEVD…RVER. A Helicase ATP-binding domain is found at 980 to 1154; sequence LFNWYNMRNC…FSLLHFLEPS (175 aa). Residue 993-1000 coordinates ATP; sequence DEMGLGKT. A DEAH box motif is present at residues 1105-1108; it reads DEAH. In terms of domain architecture, Helicase C-terminal spans 1294 to 1464; the sequence is LIDKLLPKLK…LSKKEIEDLL (171 aa). Disordered stretches follow at residues 1576-1600 and 1837-1863; these read FSDL…KSQG and DMLA…TRTP. Phosphoserine is present on residues Ser-1577 and Ser-1581. Basic and acidic residues predominate over residues 1584 to 1596; the sequence is EEKPCAKPRRPQD. Residues 1844–1855 show a composition bias toward acidic residues; the sequence is DGGEFDREDEDP. Ser-1874 is modified (phosphoserine). Composition is skewed to basic and acidic residues over residues 2170-2189 and 2198-2207; these read QAEG…KCEG and GSGKESKQEC. The interval 2170 to 2290 is disordered; that stretch reads QAEGKVEEPE…DETRDGFYME (121 aa). Residues Ser-2231, Ser-2233, Ser-2237, Ser-2251, Ser-2272, Ser-2275, Ser-2356, and Ser-2395 each carry the phosphoserine modification. Acidic residues predominate over residues 2237-2251; sequence SEEDEEEKLEDDDKS. Residues 2401–2431 are a coiled coil; sequence RRRRRKIEIEAERAAKRRNLMEMVAQLRESQ. Thr-2472 is modified (phosphothreonine). 2 positions are modified to phosphoserine: Ser-2533 and Ser-2535. Position 2551 is a phosphothreonine (Thr-2551). Residues Ser-2559 and Ser-2619 each carry the phosphoserine modification. Low complexity predominate over residues 2823 to 2832; sequence ATGNTTTASS. 2 disordered regions span residues 2823-2872 and 2935-2997; these read ATGN…SANG and EEKA…ENDE. Composition is skewed to basic and acidic residues over residues 2839-2849 and 2935-2951; these read STSKGEEKGNE and EEKA…KDGE. Residues Ser-2956 and Ser-2961 each carry the phosphoserine modification. The span at 2970–2997 shows a compositional bias: acidic residues; that stretch reads LLEDEIAQGEELDSLDGGDEIENNENDE.

It belongs to the SNF2/RAD54 helicase family. May interact with CTCF. Interacts with CHD8. Interacts with FAM124B. Found in a complex composed of AGO2, CHD7 and ARB2A. Interacts with TLK2. As to expression, widely expressed in fetal and adult tissues.

It is found in the nucleus. The protein localises to the nucleolus. The enzyme catalyses ATP + H2O = ADP + phosphate + H(+). Its function is as follows. ATP-dependent chromatin-remodeling factor, slides nucleosomes along DNA; nucleosome sliding requires ATP. Probable transcription regulator. May be involved in the in 45S precursor rRNA production. This Homo sapiens (Human) protein is Chromodomain-helicase-DNA-binding protein 7 (CHD7).